A 218-amino-acid polypeptide reads, in one-letter code: Ras-related protein R-Ras (218 aa).

The segment at 1 to 30 (MSSGAASGTGRGRPRGGGPGPRDPPPGETH) is disordered. Residues 7–20 (SGTGRGRPRGGGPG) are compositionally biased toward gly residues. 36 to 44 (GGGGVGKSA) provides a ligand contact to GTP. The Effector region signature appears at 58–66 (YDPTIEDSY). GTP-binding positions include 83 to 87 (DTAGQ), 142 to 145 (NKAD), and 172 to 174 (SAK). Position 215 is a cysteine methyl ester (Cys215). Cys215 is lipidated: S-geranylgeranyl cysteine. Residues 216 to 218 (VLL) constitute a propeptide, removed in mature form.

The protein belongs to the small GTPase superfamily. Ras family. In terms of assembly, interacts with PLCE1. Interacts (active GTP-bound form preferentially) with RGS14. Interacts with OSBPL3. Interacts with ZDHHC19. In terms of processing, S-palmitoylated by ZDHHC19, leading to increased association with membranes and with rafts/caveolae as well as enhanced cell viability.

The protein resides in the cell membrane. It carries out the reaction GTP + H2O = GDP + phosphate + H(+). GTP-binding protein with GTPase activity, likely involved in the regulation of MAPK signaling pathway and thereby controlling multiple cellular processes. Regulates the organization of the actin cytoskeleton. With OSPBL3, modulates integrin beta-1 (ITGB1) activity. This is Ras-related protein R-Ras (Rras) from Rattus norvegicus (Rat).